The chain runs to 59 residues: Large ribosomal subunit protein uL30 (59 aa).

Belongs to the universal ribosomal protein uL30 family. Part of the 50S ribosomal subunit.

This chain is Large ribosomal subunit protein uL30, found in Alkaliphilus metalliredigens (strain QYMF).